The chain runs to 210 residues: Inner membrane-spanning protein YciB (210 aa).

6 helical membrane-spanning segments follow: residues 19-39 (LVLE…GDWL), 53-73 (IFIA…VSWI), 78-98 (LPMM…LTLW), 115-135 (LFGA…GYVF), 148-168 (KLTI…EIVW), and 175-195 (FWVA…TLAQ).

Belongs to the YciB family.

It localises to the cell inner membrane. Its function is as follows. Plays a role in cell envelope biogenesis, maintenance of cell envelope integrity and membrane homeostasis. This Sinorhizobium fredii (strain NBRC 101917 / NGR234) protein is Inner membrane-spanning protein YciB.